The chain runs to 639 residues: MESPTHPKPSKDKTFPWNLVFLVGILFQIDMGMANPSPHQVYNVTWVITNVQTNSRANATSMLGTLTDAYPTLYVDLCDLVGDTWEPIAPDPRSWARYSSSTHGCKTTDRKKQQQTYPFYVCPGHAPSMGPKGTYCGGAQDGFCAAWGCETTGEAWWKPTSSWDYITVKRGSNQDNSCKGKCNPLVLQFTQKGRQASWDRPKMWGLRLYRSGYDPIALFSVSRQVMTITPPQAMGPNLVLPDQKPPSRQSQTKSKVTTQRPQITSSTPRSVASATMGPKRIGTGDRLINLVQGTYLALNATDPNKTKDCWLCLVSRPPYYEGIAVLGNYSNQTNPPPSCLSTPQHKLTISEVSGQGLCIGTVPKTHQALCKKTQKGHKGTHYLAAPNGTYWACNTGLTPCISMAVLNWTSDFCVLIELWPRVTYHQPEYIYTHFDKAVRFRREPISLTVALMLGGLTVGGIAAGVGTGTKALLETAQFRQLQIAMHTDIQALEESISALEKSLTSLSEVVLQNRRGLDILFLQEGGLCAALKEECCFYADHTGLVRDNMAKLRERLKQRQQLFDSQQGWFEGWFNKSPWFTTLISSIMGPLLILLLILLLGPCILNRLVQFVKDRISVVQALILTQQYQQIQQYDSDRP.

The signal sequence occupies residues 1-34 (MESPTHPKPSKDKTFPWNLVFLVGILFQIDMGMA). Residues 35–583 (NPSPHQVYNV…FNKSPWFTTL (549 aa)) lie on the Extracellular side of the membrane. Asparagine 43 and asparagine 58 each carry an N-linked (GlcNAc...) asparagine; by host glycan. 2 cysteine pairs are disulfide-bonded: cysteine 122/cysteine 144 and cysteine 136/cysteine 149. The disordered stretch occupies residues 232–278 (QAMGPNLVLPDQKPPSRQSQTKSKVTTQRPQITSSTPRSVASATMGP). Residues 246-273 (PSRQSQTKSKVTTQRPQITSSTPRSVAS) are compositionally biased toward polar residues. N-linked (GlcNAc...) asparagine; by host glycosylation is found at asparagine 299 and asparagine 304. Cystine bridges form between cysteine 309-cysteine 312, cysteine 309-cysteine 536, and cysteine 528-cysteine 535. A CXXC motif is present at residues 309-312 (CWLC). 4 N-linked (GlcNAc...) asparagine; by host glycosylation sites follow: asparagine 328, asparagine 331, asparagine 387, and asparagine 407. A fusion peptide region spans residues 445-465 (ISLTVALMLGGLTVGGIAAGV). 2 coiled-coil regions span residues 473–522 (LETA…ILFL) and 532–568 (KEECCFYADHTGLVRDNMAKLRERLKQRQQLFDSQQG). The immunosuppression stretch occupies residues 511–527 (LQNRRGLDILFLQEGGL). Residues 528–536 (CAALKEECC) carry the CX6CC motif. A helical membrane pass occupies residues 584 to 604 (ISSIMGPLLILLLILLLGPCI). The S-palmitoyl cysteine; by host moiety is linked to residue cysteine 603. Residues 605–639 (LNRLVQFVKDRISVVQALILTQQYQQIQQYDSDRP) lie on the Cytoplasmic side of the membrane.

The mature envelope protein (Env) consists of a trimer of SU-TM heterodimers attached by a labile interchain disulfide bond. In terms of processing, specific enzymatic cleavages in vivo yield mature proteins. Envelope glycoproteins are synthesized as an inactive precursor that is N-glycosylated and processed likely by host cell furin or by a furin-like protease in the Golgi to yield the mature SU and TM proteins. The cleavage site between SU and TM requires the minimal sequence [KR]-X-[KR]-R. The R-peptide is released from the C-terminus of the cytoplasmic tail of the TM protein upon particle formation as a result of proteolytic cleavage by the viral protease. Cleavage of this peptide is required for TM to become fusogenic. Post-translationally, the CXXC motif is highly conserved across a broad range of retroviral envelope proteins. It is thought to participate in the formation of a labile disulfide bond possibly with the CX6CC motif present in the transmembrane protein. Isomerization of the intersubunit disulfide bond to an SU intrachain disulfide bond is thought to occur upon receptor recognition in order to allow membrane fusion. The transmembrane protein is palmitoylated. In terms of processing, the R-peptide is palmitoylated.

Its subcellular location is the virion membrane. The protein localises to the host cell membrane. Its function is as follows. The surface protein (SU) attaches the virus to the host cell by binding to its receptor. This interaction triggers the refolding of the transmembrane protein (TM) and is thought to activate its fusogenic potential by unmasking its fusion peptide. Fusion occurs at the host cell plasma membrane. Functionally, the transmembrane protein (TM) acts as a class I viral fusion protein. Under the current model, the protein has at least 3 conformational states: pre-fusion native state, pre-hairpin intermediate state, and post-fusion hairpin state. During viral and target cell membrane fusion, the coiled coil regions (heptad repeats) assume a trimer-of-hairpins structure, positioning the fusion peptide in close proximity to the C-terminal region of the ectodomain. The formation of this structure appears to drive apposition and subsequent fusion of viral and target cell membranes. Membranes fusion leads to delivery of the nucleocapsid into the cytoplasm. The sequence is that of Envelope glycoprotein (env) from Feline leukemia virus (strain C/Sarma).